Here is a 452-residue protein sequence, read N- to C-terminus: Trigger factor (452 aa).

One can recognise a PPIase FKBP-type domain in the interval 170 to 256; it reads DSIVKVDFVE…IKSIKKRDLP (87 aa).

It belongs to the FKBP-type PPIase family. Tig subfamily.

It is found in the cytoplasm. The enzyme catalyses [protein]-peptidylproline (omega=180) = [protein]-peptidylproline (omega=0). In terms of biological role, involved in protein export. Acts as a chaperone by maintaining the newly synthesized protein in an open conformation. Functions as a peptidyl-prolyl cis-trans isomerase. The sequence is that of Trigger factor from Borreliella afzelii (strain PKo) (Borrelia afzelii).